Consider the following 134-residue polypeptide: MKCSVLPRSRLSWTMCVLLLPLLMLMLEGGVQGCFIRNCPRGGKRAVDSVQPTRQCMSCGPEGVGQCVGPSICCGLAIGCLMGTSEAEVCQKENESSAPCAVSGRHCGMDNTGNCVADGICCVEDACSFNSLCR.

Residues 1–33 (MKCSVLPRSRLSWTMCVLLLPLLMLMLEGGVQG) form the signal peptide. Cys34 and Cys39 are oxidised to a cystine. Residues 44–50 (KRAVDSV) constitute a propeptide that is removed on maturation. 7 cysteine pairs are disulfide-bonded: Cys56–Cys100, Cys59–Cys73, Cys67–Cys90, Cys74–Cys80, Cys107–Cys121, Cys115–Cys133, and Cys122–Cys127.

It belongs to the vasopressin/oxytocin family. Post-translationally, contains 7 disulfide bonds. As to expression, expressed by the venom duct.

The protein resides in the secreted. The protein is Terepressin/terephysin of Terebra subulata (Chocolate spotted auger).